We begin with the raw amino-acid sequence, 94 residues long: Co-chaperonin GroES (94 aa).

The protein belongs to the GroES chaperonin family. In terms of assembly, heptamer of 7 subunits arranged in a ring. Interacts with the chaperonin GroEL.

It is found in the cytoplasm. Together with the chaperonin GroEL, plays an essential role in assisting protein folding. The GroEL-GroES system forms a nano-cage that allows encapsulation of the non-native substrate proteins and provides a physical environment optimized to promote and accelerate protein folding. GroES binds to the apical surface of the GroEL ring, thereby capping the opening of the GroEL channel. The protein is Co-chaperonin GroES of Streptococcus pneumoniae (strain 70585).